The primary structure comprises 72 residues: MAKEEAIEVEGIVKESLPNTMFRVELKNGHVILAHLSGKMRKHYIKIVPGDTVKVALSPYDLTRGRIIFRER.

In terms of domain architecture, S1-like spans 1 to 72 (MAKEEAIEVE…TRGRIIFRER (72 aa)).

Belongs to the IF-1 family. In terms of assembly, component of the 30S ribosomal translation pre-initiation complex which assembles on the 30S ribosome in the order IF-2 and IF-3, IF-1 and N-formylmethionyl-tRNA(fMet); mRNA recruitment can occur at any time during PIC assembly.

The protein localises to the cytoplasm. Functionally, one of the essential components for the initiation of protein synthesis. Stabilizes the binding of IF-2 and IF-3 on the 30S subunit to which N-formylmethionyl-tRNA(fMet) subsequently binds. Helps modulate mRNA selection, yielding the 30S pre-initiation complex (PIC). Upon addition of the 50S ribosomal subunit IF-1, IF-2 and IF-3 are released leaving the mature 70S translation initiation complex. The polypeptide is Translation initiation factor IF-1 (Treponema denticola (strain ATCC 35405 / DSM 14222 / CIP 103919 / JCM 8153 / KCTC 15104)).